A 349-amino-acid chain; its full sequence is Isopentenyl-diphosphate delta-isomerase (349 aa).

6 to 7 (RK) is a binding site for substrate. Residues 62–64 (AMT), Ser-93, and Asn-122 each bind FMN. Gln-152 provides a ligand contact to substrate. Residue Glu-153 participates in Mg(2+) binding. Residues Lys-184, Thr-214, 258–259 (GG), and 280–281 (AG) contribute to the FMN site.

Belongs to the IPP isomerase type 2 family. As to quaternary structure, homooctamer. Dimer of tetramers. FMN serves as cofactor. Requires NADPH as cofactor. It depends on Mg(2+) as a cofactor.

The protein resides in the cytoplasm. It carries out the reaction isopentenyl diphosphate = dimethylallyl diphosphate. Functionally, involved in the biosynthesis of isoprenoids. Catalyzes the 1,3-allylic rearrangement of the homoallylic substrate isopentenyl (IPP) to its allylic isomer, dimethylallyl diphosphate (DMAPP). This is Isopentenyl-diphosphate delta-isomerase from Bacillus licheniformis (strain ATCC 14580 / DSM 13 / JCM 2505 / CCUG 7422 / NBRC 12200 / NCIMB 9375 / NCTC 10341 / NRRL NRS-1264 / Gibson 46).